The chain runs to 217 residues: Carbon disulfide hydrolase (217 aa).

Zn(2+) contacts are provided by C39, H98, and C101. A disordered region spans residues 192-217 (DKEKRARTDCTPTPYGVKGNQPPRWK).

It belongs to the beta-class carbonic anhydrase family. As to quaternary structure, forms only homooctamers in solution. Zn(2+) serves as cofactor.

The catalysed reaction is carbon disulfide + 2 H2O = 2 hydrogen sulfide + CO2 + 2 H(+). The protein operates within sulfur metabolism; hydrogen sulfide biosynthesis. Catalyzes the conversion of carbon disulfide into hydrogen sulfide and carbon dioxide, with carbonyl sulfide as an intermediate. Likely plays a key role in sulfur metabolism that allows A.thiooxidans S1p to grow on carbon disulfide as the main carbon and energy source. Does not show carbonic anhydrase activity (hydration of CO(2) to carbonate). This chain is Carbon disulfide hydrolase, found in Acidithiobacillus thiooxidans (Thiobacillus thiooxidans).